The primary structure comprises 391 residues: Phosphoglycerate kinase (391 aa).

Substrate is bound by residues 21–23, R36, 59–62, R113, and R146; these read DLN and HLGR. ATP contacts are provided by residues K197, E319, and 345–348; that span reads GGDT.

It belongs to the phosphoglycerate kinase family. As to quaternary structure, monomer.

It localises to the cytoplasm. The enzyme catalyses (2R)-3-phosphoglycerate + ATP = (2R)-3-phospho-glyceroyl phosphate + ADP. It participates in carbohydrate degradation; glycolysis; pyruvate from D-glyceraldehyde 3-phosphate: step 2/5. The protein is Phosphoglycerate kinase of Shewanella sediminis (strain HAW-EB3).